Here is a 61-residue protein sequence, read N- to C-terminus: Large ribosomal subunit protein bL32 (61 aa).

The segment at 1-44 (MAVQQNRKSRSRRDMRRSHDALTENALTVDQTTGETHRRHHVTK) is disordered. Positions 7 to 16 (RKSRSRRDMR) are enriched in basic residues. Over residues 25–34 (NALTVDQTTG) the composition is skewed to polar residues.

It belongs to the bacterial ribosomal protein bL32 family.

In Acinetobacter baylyi (strain ATCC 33305 / BD413 / ADP1), this protein is Large ribosomal subunit protein bL32.